A 1948-amino-acid polypeptide reads, in one-letter code: Chromodomain-helicase-DNA-binding protein 5 (1948 aa).

Disordered stretches follow at residues 1-136 (MRGP…SGQL), 228-268 (SPQQ…GRGK), and 281-336 (SKRK…GDGY). Acidic residues-rich tracts occupy residues 17–37 (EEMENEEEMSEEEDGGLEGFE) and 71–89 (NDELSENEEDLEEKSESEG). Composition is skewed to basic residues over residues 95–114 (TKKKKKKLKEKKEKKAKRKK) and 250–268 (GVRKKNKGAKDSKKKGRGK). A compositionally biased stretch (acidic residues) spans 289–299 (SEEDEPEDSDL). Positions 319-328 (KKNKRRRKKK) are enriched in basic residues. 2 consecutive PHD-type zinc fingers follow at residues 341 to 388 (QDYC…CEKE) and 414 to 461 (MEFC…CTCP). The tract at residues 341–651 (QDYCEVCQQG…HRELMLGEDA (311 aa)) is histone-binding. The Chromo 1 domain occupies 495–552 (MPPPRPLEGIPEREFFVKWAGLSYWHCSWVKELQLELYHTVMYRNYQRKNDMDEPPPF). The interval 547–569 (DEPPPFDYGSGDEDGKSEKRKNK) is disordered. The segment covering 559-569 (EDGKSEKRKNK) has biased composition (basic and acidic residues). The Chromo 2 domain maps to 590-651 (MMVHRILNHS…HRELMLGEDA (62 aa)). The 185-residue stretch at 710-894 (RFSWAQGTDT…FHLLNFLTPE (185 aa)) folds into the Helicase ATP-binding domain. 723–730 (DEMGLGKT) provides a ligand contact to ATP. The short motif at 845–848 (DEAH) is the DEAH box element. One can recognise a Helicase C-terminal domain in the interval 1026-1191 (LLQKMLKKLR…MTKQELDDIL (166 aa)). Disordered stretches follow at residues 1206-1250 (MMSQ…VEDS), 1349-1409 (YNDA…LPPL), 1521-1566 (KYST…LPDK), and 1595-1692 (TALD…EDKN). Composition is skewed to acidic residues over residues 1353 to 1364 (SQEDQEWQDELS) and 1374 to 1383 (SEDEDEDFEE). Glutamine 1388 carries the post-translational modification N5-methylglutamine. A compositionally biased stretch (pro residues) spans 1547–1561 (TPVPASPAQLPPAPL). Serine 1552 is modified (phosphoserine). Basic and acidic residues-rich tracts occupy residues 1598–1625 (DRVEAEDKHQSSDSKDRAREERMEEVEK), 1633–1650 (PLKEETLPDKEPVPDKLE), and 1657–1672 (NDFRPDDPKAEEKEPT).

The protein belongs to the SNF2/RAD54 helicase family. As to quaternary structure, component of the nucleosome remodeling and deacetylase (NuRD) repressor complex, composed of core proteins MTA1, MTA2, MTA3, RBBP4, RBBP7, HDAC1, HDAC2, MBD2, MBD3, and peripherally associated proteins CDK2AP1, CDK2AP2, GATAD2A, GATAD2B, CHD3, CHD4 and CHD5. The exact stoichiometry of the NuRD complex is unknown, and some subunits such as MBD2 and MBD3, GATAD2A and GATAD2B, and CHD3, CHD4 and CHD5 define mutually exclusive NuRD complexes. Interacts with HDAC2. Methylated at Gln-1388 by N6AMT1. In terms of tissue distribution, expressed in brain regions enriched in neurons and not in regions rich in glial cells (at protein level).

The protein resides in the nucleus. It localises to the chromosome. The enzyme catalyses ATP + H2O = ADP + phosphate + H(+). Its function is as follows. ATP-dependent chromatin-remodeling factor that binds DNA through histones and regulates gene transcription. May specifically recognize and bind trimethylated 'Lys-27' (H3K27me3) and non-methylated 'Lys-4' of histone H3. Acts as a component of the histone deacetylase NuRD complex which participates in the remodeling of chromatin. Plays a role in the development of the nervous system by activating the expression of genes promoting neuron terminal differentiation. In parallel, it may also positively regulate the trimethylation of histone H3 at 'Lys-27' thereby specifically repressing genes that promote the differentiation into non-neuronal cell lineages. Regulates the expression of genes involved in cell proliferation and differentiation. Downstream activated genes may include CDKN2A that positively regulates the p53/TP53 pathway, which in turn, prevents cell proliferation. In spermatogenesis, it probably regulates histone hyperacetylation and the replacement of histones by transition proteins in chromatin, a crucial step in the condensation of spermatid chromatin and the production of functional spermatozoa. This is Chromodomain-helicase-DNA-binding protein 5 (Chd5) from Rattus norvegicus (Rat).